The sequence spans 305 residues: uncharacterized protein (305 aa).

A signal peptide spans 1 to 29 (MSKAVSEILGYMYIFGIVMAVLAIVFVQV).

This is an uncharacterized protein from Archaeoglobus fulgidus (strain ATCC 49558 / DSM 4304 / JCM 9628 / NBRC 100126 / VC-16).